Here is a 252-residue protein sequence, read N- to C-terminus: 5-oxoprolinase subunit A (252 aa).

It belongs to the LamB/PxpA family. In terms of assembly, forms a complex composed of PxpA, PxpB and PxpC.

The enzyme catalyses 5-oxo-L-proline + ATP + 2 H2O = L-glutamate + ADP + phosphate + H(+). Catalyzes the cleavage of 5-oxoproline to form L-glutamate coupled to the hydrolysis of ATP to ADP and inorganic phosphate. This Mycolicibacterium gilvum (strain PYR-GCK) (Mycobacterium gilvum (strain PYR-GCK)) protein is 5-oxoprolinase subunit A.